Reading from the N-terminus, the 265-residue chain is Protein Exd1 homolog (265 aa).

The 3'-5' exonuclease domain maps to 32 to 82 (EKQLDRIVLIYQVDTTYHSALKDIKDQKIISLLVEPSFYGRHHPTSILVVA).

This sequence belongs to the EXD1 family. In terms of assembly, homodimer.

Functionally, RNA-binding protein. Inactive exonuclease. The chain is Protein Exd1 homolog from Drosophila melanogaster (Fruit fly).